Reading from the N-terminus, the 518-residue chain is Dihydro-ML-236C monooxygenase mlcC (518 aa).

Residues 1–31 are Cytoplasmic-facing; it reads MLGQVLLTVESYQWVSTPQALVAVAVLLSLI. The chain crosses the membrane as a helical; Signal-anchor for type II membrane protein span at residues 32–48; the sequence is AYRLRGRQSELQVYNPK. Residues 49 to 518 are Lumenal-facing; sequence KWWELTTMRA…EDIPLPHDRC (470 aa). Cysteine 454 contributes to the heme binding site.

The protein belongs to the cytochrome P450 family. Requires heme as cofactor.

The protein resides in the endoplasmic reticulum membrane. It carries out the reaction dihydro-ML-236C carboxylate + reduced [NADPH--hemoprotein reductase] + O2 = ML-236C carboxylate + oxidized [NADPH--hemoprotein reductase] + 2 H2O + H(+). It catalyses the reaction ML-236C carboxylate + reduced [NADPH--hemoprotein reductase] + O2 = ML-236A carboxylate + oxidized [NADPH--hemoprotein reductase] + H2O + H(+). Its pathway is polyketide biosynthesis. In terms of biological role, dihydro-ML-236C carboxylate monooxygenase; part of the gene cluster that mediates the biosynthesis of compactin, also known as mevastatin or ML-236B, and which acts as a potent competitive inhibitor of HMG-CoA reductase. Compactin biosynthesis is performed in two stages. The first stage is catalyzed by the nonaketide synthase mlcA, which belongs to type I polyketide synthases and catalyzes the iterative nine-step formation of the polyketide. This PKS stage is completed by the action of dehydrogenase mlcG, which catalyzes the NADPH-dependent reduction of the unsaturated tetra-, penta- and heptaketide intermediates that arise during the mlcA-mediated biosynthesis of the nonaketide chain and leads to dihydro-ML-236C carboxylate. Covalently bound dihydro-ML-236C carboxylate is released from mlcA by the mlcF esterase. Conversion of dihydro-ML-236C carboxylate into ML-236A carboxylate is subsequently performed with the participation of molecular oxygen and P450 monoogygenase mlcC. Finally, mlcH performs the conversion of ML-236A carboxylate to ML-236B/compactin carboxylate through the addition of the side-chain diketide moiety produced by the diketide synthase mlcB. This is Dihydro-ML-236C monooxygenase mlcC from Penicillium citrinum.